The sequence spans 454 residues: Serine/arginine (SR)-type shuttling mRNA binding protein HRB1 (454 aa).

Residues 1–141 (MSDQERGSEN…SSGARGDYGP (141 aa)) form a disordered region. The segment covering 14–24 (SRSRSRSPVRR) has biased composition (basic residues). 2 stretches are compositionally biased toward basic and acidic residues: residues 25–38 (RMSD…DNHL) and 50–113 (KFAD…DYPR). Arg-127 is subject to Omega-N-methylarginine. 2 RRM domains span residues 161–237 (NSIF…QDNP) and 261–338 (HEVI…SKES). Ser-338, Ser-343, and Ser-355 each carry phosphoserine. One can recognise an RRM 3 domain in the interval 376 to 453 (RLIYCSNLPF…CDLDISYAKR (78 aa)).

Methylated by HMT1.

It localises to the cytoplasm. The protein localises to the nucleus. The protein resides in the P-body. Its subcellular location is the stress granule. Binds to intron-containing transcripts and is involved in quality control for the export of spliced mRNAs from the nucleus. Binds to pre-mRNAs until splicing is completed or until faulty mRNAs are degraded. On correctly spliced mRNAs, GBP2 and HRB1 recruit MEX67 to allow nuclear export. On faulty mRNAs, GBP2 and HRB1 associate with the TRAMP complex that guides those pre-mRNAs to the exosome for degradation. The sequence is that of Serine/arginine (SR)-type shuttling mRNA binding protein HRB1 from Saccharomyces cerevisiae (strain ATCC 204508 / S288c) (Baker's yeast).